Reading from the N-terminus, the 172-residue chain is Adenine phosphoribosyltransferase (172 aa).

The protein belongs to the purine/pyrimidine phosphoribosyltransferase family. Homodimer.

The protein resides in the cytoplasm. It carries out the reaction AMP + diphosphate = 5-phospho-alpha-D-ribose 1-diphosphate + adenine. Its pathway is purine metabolism; AMP biosynthesis via salvage pathway; AMP from adenine: step 1/1. In terms of biological role, catalyzes a salvage reaction resulting in the formation of AMP, that is energically less costly than de novo synthesis. The polypeptide is Adenine phosphoribosyltransferase (Streptococcus equi subsp. zooepidemicus (strain H70)).